The following is an 89-amino-acid chain: Large ribosomal subunit protein bL27 (89 aa).

The interval 1 to 26 (MATKKAGGSSKNGRDSAGRRLGLKKT) is disordered.

Belongs to the bacterial ribosomal protein bL27 family.

The polypeptide is Large ribosomal subunit protein bL27 (Orientia tsutsugamushi (strain Boryong) (Rickettsia tsutsugamushi)).